The sequence spans 874 residues: Alanine--tRNA ligase (874 aa).

The Zn(2+) site is built by His-562, His-566, Cys-664, and His-668.

The protein belongs to the class-II aminoacyl-tRNA synthetase family. Zn(2+) serves as cofactor.

The protein localises to the cytoplasm. It catalyses the reaction tRNA(Ala) + L-alanine + ATP = L-alanyl-tRNA(Ala) + AMP + diphosphate. Its function is as follows. Catalyzes the attachment of alanine to tRNA(Ala) in a two-step reaction: alanine is first activated by ATP to form Ala-AMP and then transferred to the acceptor end of tRNA(Ala). Also edits incorrectly charged Ser-tRNA(Ala) and Gly-tRNA(Ala) via its editing domain. This chain is Alanine--tRNA ligase, found in Shewanella sp. (strain ANA-3).